The chain runs to 444 residues: ATP-dependent protease ATPase subunit HslU (444 aa).

Residues Ile-18 and 60-65 (GVGKTE) each bind ATP. The segment at 141–161 (DAWGNNEEGNNDSGTRQSFRK) is disordered. Over residues 147 to 157 (EEGNNDSGTRQ) the composition is skewed to polar residues. ATP is bound by residues Asp-257, Glu-322, and Arg-394.

This sequence belongs to the ClpX chaperone family. HslU subfamily. In terms of assembly, a double ring-shaped homohexamer of HslV is capped on each side by a ring-shaped HslU homohexamer. The assembly of the HslU/HslV complex is dependent on binding of ATP.

It is found in the cytoplasm. Its function is as follows. ATPase subunit of a proteasome-like degradation complex; this subunit has chaperone activity. The binding of ATP and its subsequent hydrolysis by HslU are essential for unfolding of protein substrates subsequently hydrolyzed by HslV. HslU recognizes the N-terminal part of its protein substrates and unfolds these before they are guided to HslV for hydrolysis. The sequence is that of ATP-dependent protease ATPase subunit HslU from Aliivibrio fischeri (strain ATCC 700601 / ES114) (Vibrio fischeri).